Reading from the N-terminus, the 445-residue chain is Phosphoglucosamine mutase (445 aa).

Residue Ser102 is the Phosphoserine intermediate of the active site. The Mg(2+) site is built by Ser102, Asp240, Asp242, and Asp244. Position 102 is a phosphoserine (Ser102).

The protein belongs to the phosphohexose mutase family. Requires Mg(2+) as cofactor. Post-translationally, activated by phosphorylation.

It carries out the reaction alpha-D-glucosamine 1-phosphate = D-glucosamine 6-phosphate. In terms of biological role, catalyzes the conversion of glucosamine-6-phosphate to glucosamine-1-phosphate. The polypeptide is Phosphoglucosamine mutase (Mycobacterium ulcerans (strain Agy99)).